Consider the following 325-residue polypeptide: NADH-quinone oxidoreductase subunit H (325 aa).

8 consecutive transmembrane segments (helical) span residues 5-25 (LIII…AAAY), 75-95 (FVYW…FVLI), 117-137 (VGVV…VLAG), 157-177 (ISYE…TGTL), 190-210 (WLIW…FAET), 240-260 (FFLG…TLFF), 268-288 (DIPI…FMWV), and 305-325 (WKVL…FTLV).

It belongs to the complex I subunit 1 family. As to quaternary structure, NDH-1 is composed of 14 different subunits. Subunits NuoA, H, J, K, L, M, N constitute the membrane sector of the complex.

Its subcellular location is the cell inner membrane. The catalysed reaction is a quinone + NADH + 5 H(+)(in) = a quinol + NAD(+) + 4 H(+)(out). NDH-1 shuttles electrons from NADH, via FMN and iron-sulfur (Fe-S) centers, to quinones in the respiratory chain. The immediate electron acceptor for the enzyme in this species is believed to be ubiquinone. Couples the redox reaction to proton translocation (for every two electrons transferred, four hydrogen ions are translocated across the cytoplasmic membrane), and thus conserves the redox energy in a proton gradient. This subunit may bind ubiquinone. This Protochlamydia amoebophila (strain UWE25) protein is NADH-quinone oxidoreductase subunit H.